The chain runs to 304 residues: Probable 5-dehydro-4-deoxyglucarate dehydratase (304 aa).

The protein belongs to the DapA family.

It carries out the reaction 5-dehydro-4-deoxy-D-glucarate + H(+) = 2,5-dioxopentanoate + CO2 + H2O. The protein operates within carbohydrate acid metabolism; D-glucarate degradation; 2,5-dioxopentanoate from D-glucarate: step 2/2. This is Probable 5-dehydro-4-deoxyglucarate dehydratase from Pseudarthrobacter chlorophenolicus (strain ATCC 700700 / DSM 12829 / CIP 107037 / JCM 12360 / KCTC 9906 / NCIMB 13794 / A6) (Arthrobacter chlorophenolicus).